A 947-amino-acid chain; its full sequence is Translation initiation factor IF-2 (947 aa).

The interval 61-284 (IQANQPAKNP…TAKNNKSHKI (224 aa)) is disordered. Basic and acidic residues predominate over residues 151–169 (QIEKAKQKLQEIQKSREAL). A compositionally biased stretch (low complexity) spans 175-188 (SNANNANSTNNANN). Over residues 189 to 206 (AKKEISEVKKQEQEIKRH) the composition is skewed to basic and acidic residues. The segment covering 207–218 (ENIKRRTGFRVI) has biased composition (basic residues). Residues 247-262 (EDIKKEWQEKDKQEAK) show a composition bias toward basic and acidic residues. The region spanning 446–615 (ERPPVVTIMG…LIQADIMELK (170 aa)) is the tr-type G domain. The tract at residues 455-462 (GHVDHGKT) is G1. 455–462 (GHVDHGKT) lines the GTP pocket. The segment at 480-484 (GITQH) is G2. Residues 501–504 (DTPG) form a G3 region. GTP-binding positions include 501 to 505 (DTPGH) and 555 to 558 (NKMD). The G4 stretch occupies residues 555 to 558 (NKMD). The tract at residues 591 to 593 (SAK) is G5.

It belongs to the TRAFAC class translation factor GTPase superfamily. Classic translation factor GTPase family. IF-2 subfamily.

The protein resides in the cytoplasm. Functionally, one of the essential components for the initiation of protein synthesis. Protects formylmethionyl-tRNA from spontaneous hydrolysis and promotes its binding to the 30S ribosomal subunits. Also involved in the hydrolysis of GTP during the formation of the 70S ribosomal complex. This chain is Translation initiation factor IF-2, found in Helicobacter pylori (strain P12).